Reading from the N-terminus, the 491-residue chain is 3-epi-6-deoxocathasterone 23-monooxygenase CYP90D1 (491 aa).

The chain crosses the membrane as a helical span at residues 7–27; the sequence is LLFFSFFFFIIIVIFNKINGL. C442 provides a ligand contact to heme.

Belongs to the cytochrome P450 family. Requires heme as cofactor. As to expression, expressed in leaf vascular tissue.

The protein localises to the endoplasmic reticulum membrane. The catalysed reaction is 3-epi-6-deoxocathasterone + reduced [NADPH--hemoprotein reductase] + O2 = 6-deoxotyphasterol + oxidized [NADPH--hemoprotein reductase] + H2O + H(+). It catalyses the reaction (22S,24R)-22-hydroxy-5alpha-ergostan-3-one + reduced [NADPH--hemoprotein reductase] + O2 = 3-dehydro-6-deoxoteasterone + oxidized [NADPH--hemoprotein reductase] + H2O + H(+). It functions in the pathway plant hormone biosynthesis; brassinosteroid biosynthesis. Functionally, involved in brassinosteroid (BR) biosynthesis. May convert teasterone (TE) to 3-dehydroteasterone (3DT, 3-DHT), or 6-deoxoteasterone (6-deoxoTE) to 3-dehydro-6-deoxoteasterone (6-deoxo3DT, 6-deoxo3DHT). C-23 hydroxylase that converts directly (22S,24R)-22-hydroxy-5-alpha-ergostan-3-one and 3-epi-6-deoxocathasterone to 3-dehydro-6-deoxoteasterone (6-deoxo3DT, 6-deoxo3DHT) and 6-deoxotyphasterol (6-deoxoTY), respectively. These C-23 hydroxylation shortcuts bypass campestanol, 6-deoxocathasterone, and 6-deoxoteasterone (6-deoxoTE). Also catalyzes the conversion of cathasterone to teasterone (TE), 6-deoxotyphasterol (6-deoxoTY) to 6-deoxocathasterone (6-deoxoCT), (22S,24R)-22-hydroxyergost-4-en-3-one (22-OH-4-en-3-one) to (22R,23R)-22,23-dihydroxy-campest-4-en-3-one (22,23-diOH-4-en-3-one) and (22S)-22-hydroxycampesterol (22-OHCR) to (22R,23R)-22,23-dihydroxycampesterol (22,23-diOHCR). This Arabidopsis thaliana (Mouse-ear cress) protein is 3-epi-6-deoxocathasterone 23-monooxygenase CYP90D1.